A 158-amino-acid chain; its full sequence is Protein Smg homolog (158 aa).

The protein belongs to the Smg family.

The polypeptide is Protein Smg homolog (Vibrio cholerae serotype O1 (strain ATCC 39315 / El Tor Inaba N16961)).